A 405-amino-acid polypeptide reads, in one-letter code: L-rhamnonate dehydratase (405 aa).

Residues histidine 33 and arginine 59 each coordinate substrate. Positions 226, 252, and 280 each coordinate Mg(2+). Histidine 329 serves as the catalytic Proton acceptor. Residue glutamate 349 participates in substrate binding.

Belongs to the mandelate racemase/muconate lactonizing enzyme family. RhamD subfamily. In terms of assembly, homooctamer; tetramer of dimers. Mg(2+) serves as cofactor.

The catalysed reaction is L-rhamnonate = 2-dehydro-3-deoxy-L-rhamnonate + H2O. In terms of biological role, catalyzes the dehydration of L-rhamnonate to 2-keto-3-deoxy-L-rhamnonate (KDR). The protein is L-rhamnonate dehydratase of Escherichia coli O127:H6 (strain E2348/69 / EPEC).